A 493-amino-acid chain; its full sequence is Ribose import ATP-binding protein RbsA (493 aa).

ABC transporter domains lie at 5 to 241 (LKIS…VGRR) and 252 to 491 (EKGE…AAAI). Residue 37-44 (GENGAGKS) participates in ATP binding.

It belongs to the ABC transporter superfamily. Ribose importer (TC 3.A.1.2.1) family. In terms of assembly, the complex is composed of an ATP-binding protein (RbsA), two transmembrane proteins (RbsC) and a solute-binding protein (RbsB).

It localises to the cell inner membrane. The enzyme catalyses D-ribose(out) + ATP + H2O = D-ribose(in) + ADP + phosphate + H(+). Part of the ABC transporter complex RbsABC involved in ribose import. Responsible for energy coupling to the transport system. This chain is Ribose import ATP-binding protein RbsA, found in Haemophilus influenzae (strain ATCC 51907 / DSM 11121 / KW20 / Rd).